A 262-amino-acid polypeptide reads, in one-letter code: Spindlin-W (262 aa).

A disordered region spans residues 1-49 (MKTPFGKSPAQRSRADAGHTRVSASMMKKRTSHKKHRNNVGPSKPISQP). Positions 27 to 38 (MKKRTSHKKHRN) are enriched in basic residues.

This sequence belongs to the SPIN/STSY family. In terms of tissue distribution, expressed predominantly in ovarian granulosa and thecal cell.

It is found in the nucleus. Its function is as follows. May play a role in mitosis. In Gallus gallus (Chicken), this protein is Spindlin-W (SPINW).